The chain runs to 139 residues: Desampylase (139 aa).

Residues 6–139 (LSLAADARDS…EFRELSVAVE (134 aa)) form the MPN domain. Catalysis depends on E31, which acts as the Proton donor/acceptor. Positions 88, 90, and 101 each coordinate Zn(2+). The JAMM motif signature appears at 88–101 (HSHPESDPVPSATD).

Belongs to the peptidase M67B family. Monomer. Zn(2+) serves as cofactor.

The enzyme catalyses an N(6)-[small archaeal modifier protein]-[protein]-L-lysine + H2O = a [protein]-L-lysine + a [small archaeal modifier protein].. Its activity is regulated as follows. Inhibited by EDTA and N-ethylmaleimide (NEM) in vitro. Functionally, metalloprotease that displays desampylase (DSAMP) activity, cleaving ubiquitin-like small archaeal modifier proteins (SAMP1, SAMP2 and SAMP3) from protein conjugates (isopeptide- and linear-linked). Thus, likely regulates sampylation and the pools of 'free' SAMP available for protein modification. Functions as a specific and not a general protease since it is unable to hydrolyze a variety of unmodified proteins otherwise hydrolyzed by proteinase K. The protein is Desampylase of Haloferax volcanii (strain ATCC 29605 / DSM 3757 / JCM 8879 / NBRC 14742 / NCIMB 2012 / VKM B-1768 / DS2) (Halobacterium volcanii).